Reading from the N-terminus, the 933-residue chain is DNA replication licensing factor MCM4 (933 aa).

Disordered regions lie at residues 1–149 (MSQQ…PRRI) and 154–173 (TRSG…PSEA). Residues 27–42 (PPQLSSPALFYSSSSS) show a composition bias toward low complexity. Polar residues-rich tracts occupy residues 49-59 (RNNSQNLSQGE) and 69-85 (SPLN…SDVF). Phosphoserine occurs at positions 52, 56, and 69. Low complexity predominate over residues 86 to 103 (QSQGRQGRIRSSASASGR). Residues 117–129 (PTSSSSLGRNGQN) show a composition bias toward polar residues. Over residues 164–173 (SSSSAPPSEA) the composition is skewed to low complexity. An MCM domain is found at 518 to 725 (LYSLLARSIA…NDRELAKHLT (208 aa)). Position 568-575 (568-575 (GDPSTSKS)) interacts with ATP. The Arginine finger motif lies at 700-703 (SRFD).

Belongs to the MCM family. As to quaternary structure, component of the MCM2-7 complex. The complex forms a toroidal hexameric ring with the proposed subunit order MCM2-MCM6-MCM4-MCM7-MCM3-MCM5; loaded onto DNA, forms a head-head double hexamer.

The protein localises to the nucleus. The enzyme catalyses ATP + H2O = ADP + phosphate + H(+). In terms of biological role, acts as a component of the MCM2-7 complex (MCM complex) which is the putative replicative helicase essential for 'once per cell cycle' DNA replication initiation and elongation in eukaryotic cells. The active ATPase sites in the MCM2-7 ring are formed through the interaction surfaces of two neighboring subunits such that a critical structure of a conserved arginine finger motif is provided in trans relative to the ATP-binding site of the Walker A box of the adjacent subunit. The six ATPase active sites, however, are likely to contribute differentially to the complex helicase activity. Once loaded onto DNA, double hexamers can slide on dsDNA in the absence of ATPase activity. Required for S phase execution. This is DNA replication licensing factor MCM4 (MCM4) from Saccharomyces cerevisiae (strain ATCC 204508 / S288c) (Baker's yeast).